A 690-amino-acid chain; its full sequence is Dual specificity protein kinase lkh1 (690 aa).

The tract at residues 39-70 (PNLPPPFSVHQLQSFVPPQPPSSSSPSTTGTV) is disordered. A Protein kinase domain is found at 362–682 (YTVVRLLGHG…AKEALWHPFF (321 aa)). ATP-binding positions include 368-376 (LGHGTFGKV) and K391. D488 serves as the catalytic Proton acceptor.

It belongs to the protein kinase superfamily. CMGC Ser/Thr protein kinase family. Lammer subfamily. Autophosphorylates on all three types of residues.

The catalysed reaction is L-seryl-[protein] + ATP = O-phospho-L-seryl-[protein] + ADP + H(+). It catalyses the reaction L-threonyl-[protein] + ATP = O-phospho-L-threonyl-[protein] + ADP + H(+). The enzyme catalyses L-tyrosyl-[protein] + ATP = O-phospho-L-tyrosyl-[protein] + ADP + H(+). Protein kinase that may act as a negative regulator of filamentous growth and flocculation. Appears to have a role in normal cell wall and septum formation and in cell separation. May have antagonistic function in the regulation of beta-glucan distribution between the sites for cell wall and septum assembly. The protein is Dual specificity protein kinase lkh1 (lkh1) of Schizosaccharomyces pombe (strain 972 / ATCC 24843) (Fission yeast).